The primary structure comprises 265 residues: Catechol O-methyltransferase (265 aa).

The Cytoplasmic portion of the chain corresponds to 1 to 2 (ML). A helical; Signal-anchor for type II membrane protein transmembrane segment spans residues 3–19 (LAAVSLGLLLLAFLLLL). At 20–265 (RHLGWGLVAI…QGPGSSPVKS (246 aa)) the chain is on the extracellular side. Residues V85, E107, S115, E133, I134, 160-163 (GASQ), S162, and D184 each bind S-adenosyl-L-methionine. D184 contacts Mg(2+). K187 lines the substrate pocket. Mg(2+) is bound by residues D212 and N213. 2 residues coordinate substrate: N213 and E242. 3 positions are modified to phosphoserine: S260, S261, and S265.

Belongs to the class I-like SAM-binding methyltransferase superfamily. Cation-dependent O-methyltransferase family. Requires Mg(2+) as cofactor.

The protein resides in the cytoplasm. The protein localises to the cell membrane. It catalyses the reaction a catechol + S-adenosyl-L-methionine = a guaiacol + S-adenosyl-L-homocysteine + H(+). It carries out the reaction 2-hydroxyestrone + S-adenosyl-L-methionine = 2-hydroxy-3-methoxy-estrone + S-adenosyl-L-homocysteine + H(+). The catalysed reaction is 4-hydroxyestrone + S-adenosyl-L-methionine = 4-methoxyestrone + S-adenosyl-L-homocysteine + H(+). The enzyme catalyses 2-hydroxyestrone + S-adenosyl-L-methionine = 2-methoxyestrone + S-adenosyl-L-homocysteine + H(+). It catalyses the reaction 4-hydroxy-17beta-estradiol + S-adenosyl-L-methionine = 4-methoxy-17beta-estradiol + S-adenosyl-L-homocysteine + H(+). It carries out the reaction 2-hydroxy-17beta-estradiol + S-adenosyl-L-methionine = 2-hydroxy-3-methoxy-17beta-estradiol + S-adenosyl-L-homocysteine + H(+). The catalysed reaction is 2-hydroxy-17beta-estradiol + S-adenosyl-L-methionine = 2-methoxy-17beta-estradiol + S-adenosyl-L-homocysteine + H(+). Its function is as follows. Catalyzes the O-methylation, and thereby the inactivation, of catecholamine neurotransmitters and catechol hormones. Also shortens the biological half-lives of certain neuroactive drugs, like L-DOPA, alpha-methyl DOPA and isoproterenol. This Mus musculus (Mouse) protein is Catechol O-methyltransferase.